The primary structure comprises 430 residues: Protein IQ-DOMAIN 3 (430 aa).

A disordered region spans residues 1–36; sequence MGKSWFSAVKKALSPEPKQKKEQKPHKSKKWFGKSK. The short motif at 9–16 is the Nuclear localization signal 1 element; the sequence is VKKALSPE. Basic residues predominate over residues 23 to 35; sequence QKPHKSKKWFGKS. Positions 107–135 constitute an IQ domain; the sequence is EEIAAIKIQTAFRGYMARRALRALRGLVR. The stretch at 170 to 224 forms a coiled coil; sequence RLRLSEDKQALTRQLQQKHNKDFDKTGENWNDSTLSREKVEANMLNKQVATMRRE. The segment at 213-231 is calmodulin-binding; the sequence is MLNKQVATMRREKALAYAF. Disordered regions lie at residues 271–368 and 385–430; these read ENHS…SQSV and SNLS…TNLA. A compositionally biased stretch (low complexity) spans 286 to 295; that stretch reads ARSVASRAMS. The span at 326-340 shows a compositional bias: polar residues; that stretch reads SEDSNSIVSFQSEQP. Residues 396–403 carry the Nuclear localization signal 2 motif; that stretch reads AKKRLSFS.

The protein belongs to the IQD family. As to quaternary structure, binds to multiple calmodulin (CaM) in the presence of Ca(2+) and CaM-like proteins.

The protein resides in the nucleus. It is found in the nucleolus. It localises to the cytoplasm. The protein localises to the cytoskeleton. Functionally, may be involved in cooperative interactions with calmodulins or calmodulin-like proteins. Recruits calmodulin proteins to microtubules, thus being a potential scaffold in cellular signaling and trafficking. May associate with nucleic acids and regulate gene expression at the transcriptional or post-transcriptional level. This Arabidopsis thaliana (Mouse-ear cress) protein is Protein IQ-DOMAIN 3.